The sequence spans 100 residues: Bombyxin A-2 homolog (100 aa).

The first 18 residues, 1–18 (MRTQVLFLIVVLAVMASG), serve as a signal peptide directing secretion. Disulfide bonds link C26–C85, C38–C98, and C84–C89. Positions 47–75 (PPYISSENEGYGWKWLERQRARQLDEARG) are cleaved as a propeptide — c peptide like.

The protein belongs to the insulin family. As to quaternary structure, heterodimer of a B chain and an A chain linked by two disulfide bonds.

The protein resides in the secreted. Brain peptide responsible for activation of prothoracic glands to produce ecdysone in insects. This Samia cynthia (Ailanthus silkmoth) protein is Bombyxin A-2 homolog (SBXA2).